The primary structure comprises 346 residues: Fusaric acid resistance protein FusC (346 aa).

The next 4 membrane-spanning stretches (helical) occupy residues 10-30 (VIIG…RYTG), 248-268 (VILA…VMLV), 291-311 (MGMG…GIYP), and 315-335 (GFVL…YMSL).

It belongs to the aromatic acid exporter ArAE (TC 2.A.85) family.

The protein resides in the cell membrane. Functionally, involved in the resistance (detoxification) of the fungal toxin fusaric acid. The chain is Fusaric acid resistance protein FusC (fusC) from Burkholderia cepacia (Pseudomonas cepacia).